A 356-amino-acid chain; its full sequence is GTPase Obg (356 aa).

Positions 1-159 constitute an Obg domain; that stretch reads MKFLDEAKVY…RWIWLRMKLI (159 aa). Residues 160–327 enclose the OBG-type G domain; the sequence is ADAGLVGLPN…VLRALTDVIS (168 aa). GTP contacts are provided by residues 166–173, 191–195, 212–215, 279–282, and 308–310; these read GLPNAGKS, FTTLH, DIPG, NKID, and SGV. Mg(2+) contacts are provided by S173 and T193. The tract at residues 329–356 is disordered; it reads APVSTKAKGEPTENETPPPSTGWSPLSN.

Belongs to the TRAFAC class OBG-HflX-like GTPase superfamily. OBG GTPase family. As to quaternary structure, monomer. Mg(2+) serves as cofactor.

The protein resides in the cytoplasm. Its function is as follows. An essential GTPase which binds GTP, GDP and possibly (p)ppGpp with moderate affinity, with high nucleotide exchange rates and a fairly low GTP hydrolysis rate. Plays a role in control of the cell cycle, stress response, ribosome biogenesis and in those bacteria that undergo differentiation, in morphogenesis control. The chain is GTPase Obg from Afipia carboxidovorans (strain ATCC 49405 / DSM 1227 / KCTC 32145 / OM5) (Oligotropha carboxidovorans).